The sequence spans 465 residues: Asparagine--tRNA ligase (465 aa).

It belongs to the class-II aminoacyl-tRNA synthetase family. Homodimer.

The protein localises to the cytoplasm. The catalysed reaction is tRNA(Asn) + L-asparagine + ATP = L-asparaginyl-tRNA(Asn) + AMP + diphosphate + H(+). This is Asparagine--tRNA ligase from Clostridium perfringens (strain SM101 / Type A).